We begin with the raw amino-acid sequence, 104 residues long: V-type ATP synthase subunit F (104 aa).

It belongs to the V-ATPase F subunit family.

Functionally, produces ATP from ADP in the presence of a proton gradient across the membrane. The sequence is that of V-type ATP synthase subunit F (atpF) from Thermus thermophilus (strain ATCC 27634 / DSM 579 / HB8).